A 128-amino-acid chain; its full sequence is Protein ripply2 (128 aa).

The disordered stretch occupies residues M1–E64. The span at P17 to P28 shows a compositional bias: low complexity. The WRPW motif motif lies at W34–W37. The interval H74 to Y109 is ripply homology domain.

It belongs to the ripply family. As to expression, expressed in the embryonic anterior presomitic mesoderm. First expressed in S-I at 8.5 dpc, where expression is maintained until 13.5 dpc, with an additional stripe of expression sometimes seen in the rostral part of S0 and S-I.

It is found in the nucleus. In terms of biological role, plays a role in somitogenesis. Required for somite segregation and establishment of rostrocaudal polarity in somites. The polypeptide is Protein ripply2 (Mus musculus (Mouse)).